Consider the following 99-residue polypeptide: EPIDERMAL PATTERNING FACTOR-like protein 8 (99 aa).

Positions 1–35 are cleaved as a signal peptide; the sequence is MDSSRKYKRCGFGAALFVANIFFSLLSLHCISGAH. Intrachain disulfides connect Cys53–Cys90, Cys57–Cys63, and Cys60–Cys92.

It belongs to the plant cysteine rich small secretory peptide family. Epidermal patterning factor subfamily.

It localises to the secreted. In terms of biological role, controls stomatal patterning. The chain is EPIDERMAL PATTERNING FACTOR-like protein 8 from Arabidopsis thaliana (Mouse-ear cress).